A 438-amino-acid polypeptide reads, in one-letter code: 23S rRNA (uracil(1939)-C(5))-methyltransferase RlmD (438 aa).

A TRAM domain is found at 10–69 (KASVNTKHLSVDVVRLDHNGAGIAFVDKKPVFIEGALPGEKAIIQFIEQKKQFSRAKLIK). 4 residues coordinate [4Fe-4S] cluster: C82, C88, C91, and C169. Residues Q272, F301, N306, E322, N349, and D370 each coordinate S-adenosyl-L-methionine. Residue C396 is the Nucleophile of the active site.

This sequence belongs to the class I-like SAM-binding methyltransferase superfamily. RNA M5U methyltransferase family. RlmD subfamily.

The catalysed reaction is uridine(1939) in 23S rRNA + S-adenosyl-L-methionine = 5-methyluridine(1939) in 23S rRNA + S-adenosyl-L-homocysteine + H(+). Its function is as follows. Catalyzes the formation of 5-methyl-uridine at position 1939 (m5U1939) in 23S rRNA. The protein is 23S rRNA (uracil(1939)-C(5))-methyltransferase RlmD of Aliivibrio fischeri (strain MJ11) (Vibrio fischeri).